A 122-amino-acid polypeptide reads, in one-letter code: Autophagy-related protein 8b (122 aa).

Residue G117 is the site of Phosphatidylethanolamine amidated glycine attachment. A propeptide spans 118-122 (GSFYC) (removed in mature form).

The protein belongs to the ATG8 family. As to quaternary structure, interacts with ATG4. Interacts with NBR1. The C-terminal 5 residues are removed by ATG4 to expose Gly-117 at the C-terminus. This Gly-117 forms then a thioester bond with the 'Cys-558' of ATG7 (E1-like activating enzyme) before being transferred to the 'Cys-258' of ATG3 (the specific E2 conjugating enzyme), in order to be finally amidated with phosphatidylethanolamine. This lipid modification anchors ATG8 to autophagosomes. Constitutively expressed.

It is found in the cytoplasmic vesicle. The protein resides in the autophagosome membrane. It localises to the vacuole membrane. The protein localises to the cytoplasm. Its subcellular location is the cytoskeleton. In terms of biological role, ubiquitin-like modifier involved in autophagosomes formation. May mediate the delivery of the autophagosomes to the vacuole via the microtubule cytoskeleton. The sequence is that of Autophagy-related protein 8b (ATG8B) from Arabidopsis thaliana (Mouse-ear cress).